Reading from the N-terminus, the 494-residue chain is 1-aminocyclopropane-1-carboxylate synthase 2 (494 aa).

An N6-(pyridoxal phosphate)lysine modification is found at K279. The tract at residues N474–Y494 is disordered. Residues V475–P484 show a composition bias toward polar residues.

Belongs to the class-I pyridoxal-phosphate-dependent aminotransferase family. In terms of assembly, homodimer. Requires pyridoxal 5'-phosphate as cofactor.

The enzyme catalyses S-adenosyl-L-methionine = 1-aminocyclopropane-1-carboxylate + S-methyl-5'-thioadenosine + H(+). Its pathway is alkene biosynthesis; ethylene biosynthesis via S-adenosyl-L-methionine; ethylene from S-adenosyl-L-methionine: step 1/2. In terms of biological role, catalyzes the formation of 1-aminocyclopropane-1-carboxylate, a direct precursor of ethylene in higher plants. This is 1-aminocyclopropane-1-carboxylate synthase 2 (ACS2) from Cucurbita pepo (Vegetable marrow).